A 161-amino-acid chain; its full sequence is Nucleotide-binding protein Rpic_2826 (161 aa).

This sequence belongs to the YajQ family.

Nucleotide-binding protein. This is Nucleotide-binding protein Rpic_2826 from Ralstonia pickettii (strain 12J).